The following is a 119-amino-acid chain: Circadian clock oscillator protein KaiB (119 aa).

Belongs to the KaiB family. In terms of assembly, may undergo a major conformational rearrangment; in the free state forms homooligomers. When bound to KaiC switches to a monomeric thioredoxin-fold (KaiB(fs)). The active oscillator complex is probably KaiC(6):KaiB(6).

Its function is as follows. Component of the KaiBC clock protein complex, which constitutes the main circadian regulator in cyanobacteria; it may modify the ATPase activity of KaiC. May be a metamorphic protein which reversibly switches between an inactive tetrameric fold and a rare, thioredoxin-like monomeric fold (KaiB(fs)). KaiB(fs) binds phospho-KaiC, and perhaps clock output effectors. This is Circadian clock oscillator protein KaiB from Prochlorococcus marinus (strain MIT 9313).